A 1207-amino-acid polypeptide reads, in one-letter code: DNA-directed RNA polymerase subunit beta (1207 aa).

It belongs to the RNA polymerase beta chain family. As to quaternary structure, the RNAP catalytic core consists of 2 alpha, 1 beta, 1 beta' and 1 omega subunit. When a sigma factor is associated with the core the holoenzyme is formed, which can initiate transcription.

The catalysed reaction is RNA(n) + a ribonucleoside 5'-triphosphate = RNA(n+1) + diphosphate. DNA-dependent RNA polymerase catalyzes the transcription of DNA into RNA using the four ribonucleoside triphosphates as substrates. In Enterococcus faecalis (strain ATCC 700802 / V583), this protein is DNA-directed RNA polymerase subunit beta.